The following is a 94-amino-acid chain: Small ribosomal subunit protein bS6 (94 aa).

It belongs to the bacterial ribosomal protein bS6 family.

Its function is as follows. Binds together with bS18 to 16S ribosomal RNA. The sequence is that of Small ribosomal subunit protein bS6 from Clostridium botulinum (strain Loch Maree / Type A3).